We begin with the raw amino-acid sequence, 136 residues long: Histone H2B (136 aa).

A compositionally biased stretch (basic and acidic residues) spans 1–10 (MPPKAADKKP). A disordered region spans residues 1–44 (MPPKAADKKPAAKAPVASKAPEKKDAGKKTASTGEKKKRTKARR). 2 positions are modified to N6-acetyllysine; alternate: Lys-8 and Lys-9. Glycyl lysine isopeptide (Lys-Gly) (interchain with G-Cter in SUMO); alternate cross-links involve residues Lys-8 and Lys-9. The residue at position 13 (Lys-13) is an N6-acetyllysine. At Lys-23 the chain carries N6-acetyllysine; alternate. Residue Lys-23 forms a Glycyl lysine isopeptide (Lys-Gly) (interchain with G-Cter in SUMO); alternate linkage. Lys-24 is covalently cross-linked (Glycyl lysine isopeptide (Lys-Gly) (interchain with G-Cter in SUMO)). Lys-130 participates in a covalent cross-link: Glycyl lysine isopeptide (Lys-Gly) (interchain with G-Cter in ubiquitin).

This sequence belongs to the histone H2B family. As to quaternary structure, the nucleosome is a histone octamer containing two molecules each of H2A, H2B, H3 and H4 assembled in one H3-H4 heterotetramer and two H2A-H2B heterodimers. The octamer wraps approximately 147 bp of DNA. Monoubiquitinated to form H2BK123ub1. H2BK123ub1 gives a specific tag for epigenetic transcriptional activation and is also prerequisite for H3K4me and H3K79me formation. H2BK123ub1 also modulates the formation of double-strand breaks during meiosis and is a prerequisite for DNA-damage checkpoint activation. Post-translationally, acetylated by GCN5 to form H2BK11ac and H2BK16ac. H2BK16ac can also be formed by ESA1. Acetylation of N-terminal lysines and particularly formation of H2BK11acK16ac has a positive effect on transcription. In terms of processing, sumoylation to form H2BK6su or H2BK7su, and probably also H2BK16su or H2BK17su, occurs preferentially near the telomeres and represses gene transcription.

It localises to the nucleus. Its subcellular location is the chromosome. Core component of nucleosome. Nucleosomes wrap and compact DNA into chromatin, limiting DNA accessibility to the cellular machineries which require DNA as a template. Histones thereby play a central role in transcription regulation, DNA repair, DNA replication and chromosomal stability. DNA accessibility is regulated via a complex set of post-translational modifications of histones, also called histone code, and nucleosome remodeling. The protein is Histone H2B (hh2b) of Rosellinia necatrix (White root-rot fungus).